The sequence spans 63 residues: Putative flagellar calcium-binding protein (63 aa).

Positions 1 to 11 (MGCISSKSTQT) are enriched in polar residues. The disordered stretch occupies residues 1–23 (MGCISSKSTQTGKKEGKTAAERK). Basic and acidic residues predominate over residues 12 to 23 (GKKEGKTAAERK). In terms of domain architecture, EF-hand spans 40–63 (EDKARRIELFKKFDKNNTGKLSME). Residues D53, N55, T57, and K59 each contribute to the Ca(2+) site.

This sequence belongs to the calflagin family.

Its subcellular location is the cell projection. The protein resides in the cilium. It localises to the flagellum. The sequence is that of Putative flagellar calcium-binding protein (CABP) from Crithidia fasciculata.